Consider the following 347-residue polypeptide: MRIEQELKLGFKDVLFRPKRSTLKSRSQVELTRDFTFKHSGRQWSGTPVIAANMDSVASFEMAAALAEHGVMTAVHKHYTVEQWAEFAKTADKKTLNNVFVSTGTSEAEFEKVKKIMALSEEFVFICIDIANGYSEHLVEFVQKVRAEFPTKVISAGNVVTGDMVEELILAGADIVKVGIGPGSVCTTRVKTGVGYPQLSAIIECGDAAHGLGGMIIGDGGCSCAGDVSKAFGGGADFVMLGGMLAGHSESGGEVVEQDGKQYMKFYGMSSQSAMDKHSGGVAKYRAAEGKTVLLPYRGSVHNTISDILGGVRSTCTYVGAAKLKELTKRTTFIRVQEQENNVFGKE.

Residue 108-131 coordinates NADP(+); that stretch reads AEFEKVKKIMALSEEFVFICIDIA. Residues Gly181 and Gly183 each coordinate K(+). Cys186 acts as the Thioimidate intermediate in catalysis. 216–239 contacts NADP(+); it reads IIGDGGCSCAGDVSKAFGGGADFV.

It belongs to the IMPDH/GMPR family. GuaC type 1 subfamily. In terms of assembly, homotetramer.

It catalyses the reaction IMP + NH4(+) + NADP(+) = GMP + NADPH + 2 H(+). Catalyzes the irreversible NADPH-dependent deamination of GMP to IMP. It functions in the conversion of nucleobase, nucleoside and nucleotide derivatives of G to A nucleotides, and in maintaining the intracellular balance of A and G nucleotides. In Vibrio atlanticus (strain LGP32) (Vibrio splendidus (strain Mel32)), this protein is GMP reductase.